The chain runs to 338 residues: DNA-directed RNA polymerase subunit alpha (338 aa).

An alpha N-terminal domain (alpha-NTD) region spans residues 1 to 225 (MLISQRPTLT…ELFGLARELN (225 aa)). Residues 242 to 338 (YIAAYSMPIE…YIDVEPEDAE (97 aa)) form an alpha C-terminal domain (alpha-CTD) region. Residues 314 to 338 (FDPSTLEGYDAETGGYIDVEPEDAE) form a disordered region.

It belongs to the RNA polymerase alpha chain family. In terms of assembly, homodimer. The RNAP catalytic core consists of 2 alpha, 1 beta, 1 beta' and 1 omega subunit. When a sigma factor is associated with the core the holoenzyme is formed, which can initiate transcription.

The enzyme catalyses RNA(n) + a ribonucleoside 5'-triphosphate = RNA(n+1) + diphosphate. Its function is as follows. DNA-dependent RNA polymerase catalyzes the transcription of DNA into RNA using the four ribonucleoside triphosphates as substrates. This chain is DNA-directed RNA polymerase subunit alpha, found in Corynebacterium efficiens (strain DSM 44549 / YS-314 / AJ 12310 / JCM 11189 / NBRC 100395).